The sequence spans 737 residues: Photosystem I P700 chlorophyll a apoprotein A2 (737 aa).

8 helical membrane-spanning segments follow: residues 46–69, 135–158, 175–199, 273–291, 333–356, 372–398, 420–442, and 520–538; these read LFST…FHIA, LYQG…LHLQ, LNHH…HVAI, IAHH…GHMY, LHFQ…QHMY, AALY…IFFI, AIIS…LYVH, and FLVH…LILV. [4Fe-4S] cluster contacts are provided by Cys562 and Cys571. A run of 2 helical transmembrane segments spans residues 578–599 and 646–668; these read AFYL…YWHW and LAVW…MFLI. Chlorophyll a contacts are provided by His657, Met665, and Tyr673. Position 674 (Trp674) interacts with phylloquinone. A helical membrane pass occupies residues 710–730; it reads VVGLAHFSVGYVLTYAAFLIA.

Belongs to the PsaA/PsaB family. The PsaA/B heterodimer binds the P700 chlorophyll special pair and subsequent electron acceptors. PSI consists of a core antenna complex that captures photons, and an electron transfer chain that converts photonic excitation into a charge separation. The cyanobacterial PSI reaction center is composed of one copy each of PsaA,B,C,D,E,F,I,J,K,L,M and X, and forms trimeric complexes. It depends on PSI electron transfer chain: 5 chlorophyll a, 1 chlorophyll a', 2 phylloquinones and 3 4Fe-4S clusters. PSI core antenna: 90 chlorophyll a, 22 carotenoids, 3 phospholipids and 1 galactolipid. P700 is a chlorophyll a/chlorophyll a' dimer, A0 is one or more chlorophyll a, A1 is one or both phylloquinones and FX is a shared 4Fe-4S iron-sulfur center. as a cofactor.

The protein localises to the cellular thylakoid membrane. It catalyses the reaction reduced [plastocyanin] + hnu + oxidized [2Fe-2S]-[ferredoxin] = oxidized [plastocyanin] + reduced [2Fe-2S]-[ferredoxin]. PsaA and PsaB bind P700, the primary electron donor of photosystem I (PSI), as well as the electron acceptors A0, A1 and FX. PSI is a plastocyanin/cytochrome c6-ferredoxin oxidoreductase, converting photonic excitation into a charge separation, which transfers an electron from the donor P700 chlorophyll pair to the spectroscopically characterized acceptors A0, A1, FX, FA and FB in turn. Oxidized P700 is reduced on the lumenal side of the thylakoid membrane by plastocyanin or cytochrome c6. The chain is Photosystem I P700 chlorophyll a apoprotein A2 from Parasynechococcus marenigrum (strain WH8102).